The following is a 748-amino-acid chain: MSNEAKCPFNHTAGSGTTNQDWWPKRLRLELLSQHSAKTNPLDPDFDYAKAFNSLDLAAVKQDLAKLMTDSQDWWPADFGHYGPLFIRMAWHSAGTYRVGDGRGGAGRGQQRFAPLNSWPDNVSLDKARRLLWPIKKKYGNKISWADLFILTGNVALETMGFKTFGFGGGREDTWEPDQDVYWGDEKTWLGGDLRYGKNEAQPVADKAGHGKEHGRTDGGRNLENPLAAVQMGLIYVNPEGPDGNPDPQASAHDIRETFARMAMNDEETVALIAGGHTFGKTHGAGPADNVGPEPEAAELENQGLGWKNSFGTGKGSDTITSGLEVTWTSTPTKWSNNFFWNLFGYEWELTKSPAGAHQWIPKHGAGAGSVPDAHDPSKRHVPSMLTSDIALRVDPAYEKIARRFFENPDEFADAFARAWFKLTHRDMGPRVRYLGPEVPAEDLIWQDPIPKVNHPLVDDQDVAALKQKVLASGLSVSELVSTAWASASTFRGSDKRGGANGARIRLAPQKDWAVNQPEQLAKVLKVLEGIQADFNGKQSGGKKVSLADLIVLAGCAAIEQAAGQAGHKVTVPFTAGRMDASQEQTDVASFAPLEPVHDGFRNFLKSRYDVPAEHLLIDRAQLLTLTAPEMTVLIGGLRVLDVHTDKEKHGVFTDRPGVLTNDFFRNLIDMGTEWKPSSPARESFTGHDRKTGKQKWTASRVDLVFGSNSQLRALSEVYASDDAQDKFVRDFIAAWTKVMNLDRFDLK.

The tryptophyl-tyrosyl-methioninium (Trp-Tyr) (with M-262) cross-link spans 91–236 (WHSAGTYRVG…LAAVQMGLIY (146 aa)). The active-site Proton acceptor is histidine 92. The interval 201–223 (AQPVADKAGHGKEHGRTDGGRNL) is disordered. A compositionally biased stretch (basic and acidic residues) spans 207–221 (KAGHGKEHGRTDGGR). Residues 236–262 (YVNPEGPDGNPDPQASAHDIRETFARM) constitute a cross-link (tryptophyl-tyrosyl-methioninium (Tyr-Met) (with W-91)). Histidine 277 contributes to the heme b binding site.

It belongs to the peroxidase family. Peroxidase/catalase subfamily. Homodimer or homotetramer. Heme b serves as cofactor. Formation of the three residue Trp-Tyr-Met cross-link is important for the catalase, but not the peroxidase activity of the enzyme.

It carries out the reaction H2O2 + AH2 = A + 2 H2O. The enzyme catalyses 2 H2O2 = O2 + 2 H2O. In terms of biological role, bifunctional enzyme with both catalase and broad-spectrum peroxidase activity. This Bordetella avium (strain 197N) protein is Catalase-peroxidase.